A 310-amino-acid polypeptide reads, in one-letter code: Methionyl-tRNA formyltransferase (310 aa).

(6S)-5,6,7,8-tetrahydrofolate is bound at residue 109-112 (SLLP).

It belongs to the Fmt family.

It carries out the reaction L-methionyl-tRNA(fMet) + (6R)-10-formyltetrahydrofolate = N-formyl-L-methionyl-tRNA(fMet) + (6S)-5,6,7,8-tetrahydrofolate + H(+). Functionally, attaches a formyl group to the free amino group of methionyl-tRNA(fMet). The formyl group appears to play a dual role in the initiator identity of N-formylmethionyl-tRNA by promoting its recognition by IF2 and preventing the misappropriation of this tRNA by the elongation apparatus. The chain is Methionyl-tRNA formyltransferase from Pseudomonas putida (strain ATCC 47054 / DSM 6125 / CFBP 8728 / NCIMB 11950 / KT2440).